A 100-amino-acid chain; its full sequence is NADH-quinone oxidoreductase subunit K (100 aa).

A run of 3 helical transmembrane segments spans residues 4–24, 28–48, and 61–81; these read FEYYVALSGLLMVLGFIGVII, IIAMLLSTELMLNAVNIAFVA, and FVFFILTIAAAEAAIGLGLII.

It belongs to the complex I subunit 4L family. NDH-1 is composed of 14 different subunits. Subunits NuoA, H, J, K, L, M, N constitute the membrane sector of the complex.

The protein localises to the cell inner membrane. The enzyme catalyses a quinone + NADH + 5 H(+)(in) = a quinol + NAD(+) + 4 H(+)(out). NDH-1 shuttles electrons from NADH, via FMN and iron-sulfur (Fe-S) centers, to quinones in the respiratory chain. The immediate electron acceptor for the enzyme in this species is believed to be ubiquinone. Couples the redox reaction to proton translocation (for every two electrons transferred, four hydrogen ions are translocated across the cytoplasmic membrane), and thus conserves the redox energy in a proton gradient. The polypeptide is NADH-quinone oxidoreductase subunit K (Sulfurihydrogenibium sp. (strain YO3AOP1)).